Reading from the N-terminus, the 90-residue chain is Protein RALF-like 3 (90 aa).

The signal sequence occupies residues 1-29 (MSNLRGTNRFILVAVLVSFVFLSIMNAEA). 2 disulfide bridges follow: Cys59–Cys67 and Cys80–Cys86.

The protein belongs to the plant rapid alkalinization factor (RALF) family.

Its subcellular location is the secreted. Functionally, cell signaling peptide that may regulate plant stress, growth, and development. Mediates a rapid alkalinization of extracellular space by mediating a transient increase in the cytoplasmic Ca(2+) concentration leading to a calcium-dependent signaling events through a cell surface receptor and a concomitant activation of some intracellular mitogen-activated protein kinases. In Arabidopsis thaliana (Mouse-ear cress), this protein is Protein RALF-like 3 (RALFL3).